The chain runs to 308 residues: Ferredoxin--NADP reductase (308 aa).

Glu26, Gln34, Tyr39, Val77, Phe106, Asp266, and Thr306 together coordinate FAD.

This sequence belongs to the ferredoxin--NADP reductase type 2 family. As to quaternary structure, homodimer. The cofactor is FAD.

The enzyme catalyses 2 reduced [2Fe-2S]-[ferredoxin] + NADP(+) + H(+) = 2 oxidized [2Fe-2S]-[ferredoxin] + NADPH. This chain is Ferredoxin--NADP reductase, found in Lactobacillus delbrueckii subsp. bulgaricus (strain ATCC 11842 / DSM 20081 / BCRC 10696 / JCM 1002 / NBRC 13953 / NCIMB 11778 / NCTC 12712 / WDCM 00102 / Lb 14).